The following is a 378-amino-acid chain: Beta-1,3-galactosyltransferase pvg3 (378 aa).

The Cytoplasmic portion of the chain corresponds to 1-8 (MFSNSKKK). Residues 9 to 29 (IFLYVLIAGVATFSFAFLVLN) traverse the membrane as a helical; Signal-anchor for type II membrane protein segment. At 30-378 (RLQAEEHSLA…ATIPLPSLDV (349 aa)) the chain is on the lumenal side. Residues N53, N97, N180, and N354 are each glycosylated (N-linked (GlcNAc...) asparagine).

Belongs to the glycosyltransferase 31 family.

The protein resides in the endoplasmic reticulum membrane. The protein localises to the golgi apparatus. It localises to the golgi stack membrane. It catalyses the reaction 3-O-(beta-D-galactosyl-(1-&gt;4)-beta-D-xylosyl)-L-seryl-[protein] + UDP-alpha-D-galactose = 3-O-(beta-D-galactosyl-(1-&gt;3)-beta-D-galactosyl-(1-&gt;4)-beta-D-xylosyl)-L-seryl-[protein] + UDP + H(+). In terms of biological role, involved in cell wall biogenesis. Has a role in the addition of Gal-beta1,3 moeities to galactomannans and their subsequent pyruvylation. Has a role in meiosis. The polypeptide is Beta-1,3-galactosyltransferase pvg3 (pvg3) (Schizosaccharomyces pombe (strain 972 / ATCC 24843) (Fission yeast)).